A 196-amino-acid polypeptide reads, in one-letter code: Pyridoxal 5'-phosphate synthase subunit PdxT (196 aa).

L-glutamine is bound at residue 47 to 49; the sequence is GES. The active-site Nucleophile is the Cys-79. Residues Arg-106 and 134–135 contribute to the L-glutamine site; that span reads IR. Catalysis depends on charge relay system residues His-170 and Glu-172.

Belongs to the glutaminase PdxT/SNO family. As to quaternary structure, in the presence of PdxS, forms a dodecamer of heterodimers. Only shows activity in the heterodimer.

It catalyses the reaction aldehydo-D-ribose 5-phosphate + D-glyceraldehyde 3-phosphate + L-glutamine = pyridoxal 5'-phosphate + L-glutamate + phosphate + 3 H2O + H(+). The catalysed reaction is L-glutamine + H2O = L-glutamate + NH4(+). The protein operates within cofactor biosynthesis; pyridoxal 5'-phosphate biosynthesis. Its function is as follows. Catalyzes the hydrolysis of glutamine to glutamate and ammonia as part of the biosynthesis of pyridoxal 5'-phosphate. The resulting ammonia molecule is channeled to the active site of PdxS. In Bacillus velezensis (strain DSM 23117 / BGSC 10A6 / LMG 26770 / FZB42) (Bacillus amyloliquefaciens subsp. plantarum), this protein is Pyridoxal 5'-phosphate synthase subunit PdxT.